The chain runs to 219 residues: Large ribosomal subunit protein uL16 (219 aa).

The protein belongs to the universal ribosomal protein uL16 family. In terms of assembly, component of the large ribosomal subunit. Mature ribosomes consist of a small (40S) and a large (60S) subunit. The 40S subunit contains about 33 different proteins and 1 molecule of RNA (18S). The 60S subunit contains about 49 different proteins and 3 molecules of RNA (28S, 5.8S and 5S).

In Bombyx mandarina (Wild silk moth), this protein is Large ribosomal subunit protein uL16 (RpL10).